The chain runs to 246 residues: Endonuclease V (246 aa).

2 residues coordinate Mg(2+): aspartate 50 and aspartate 120.

The protein belongs to the endonuclease V family. Mg(2+) serves as cofactor.

The protein resides in the cytoplasm. The enzyme catalyses Endonucleolytic cleavage at apurinic or apyrimidinic sites to products with a 5'-phosphate.. Functionally, DNA repair enzyme involved in the repair of deaminated bases. Selectively cleaves double-stranded DNA at the second phosphodiester bond 3' to a deoxyinosine leaving behind the intact lesion on the nicked DNA. The polypeptide is Endonuclease V (Gloeobacter violaceus (strain ATCC 29082 / PCC 7421)).